A 616-amino-acid chain; its full sequence is FNIP repeat-containing protein DDB_G0290639 (616 aa).

Positions 239 to 274 (FENNNNNNNNNNNNNNNNNNNNNNNNNNNNNKKTEK) form a coiled coil. Low complexity predominate over residues 241–269 (NNNNNNNNNNNNNNNNNNNNNNNNNNNNN). The disordered stretch occupies residues 241–270 (NNNNNNNNNNNNNNNNNNNNNNNNNNNNNK). 6 FNIP repeats span residues 337–379 (FEES…FNDG), 380–421 (FNQS…KLCN), 423–464 (FSQP…VFYD), 466–508 (FNQL…FSDG), 509–550 (FNQT…LIDS), and 552–593 (FQQP…ILDK).

The protein is FNIP repeat-containing protein DDB_G0290639 of Dictyostelium discoideum (Social amoeba).